The primary structure comprises 485 residues: Phosphoglucosamine mutase (485 aa).

The Phosphoserine intermediate role is filled by serine 133. Mg(2+) is bound by residues serine 133, aspartate 274, aspartate 276, and aspartate 278. Serine 133 is subject to Phosphoserine.

This sequence belongs to the phosphohexose mutase family. It depends on Mg(2+) as a cofactor. Activated by phosphorylation.

It carries out the reaction alpha-D-glucosamine 1-phosphate = D-glucosamine 6-phosphate. Its function is as follows. Catalyzes the conversion of glucosamine-6-phosphate to glucosamine-1-phosphate. This is Phosphoglucosamine mutase from Rippkaea orientalis (strain PCC 8801 / RF-1) (Cyanothece sp. (strain PCC 8801)).